The primary structure comprises 493 residues: Ectonucleoside triphosphate diphosphohydrolase 8 (493 aa).

The Cytoplasmic portion of the chain corresponds to 1–7 (MEYKGKV). A helical transmembrane segment spans residues 8–28 (VAGLLTATCVFSIIALILSAV). Topologically, residues 29-463 (DVKDVFLPPG…ALEHVKGHEP (435 aa)) are extracellular. N-linked (GlcNAc...) asparagine glycans are attached at residues N65, N79, and N133. A disulfide bridge links C76 with C100. E166 acts as the Proton acceptor in catalysis. N-linked (GlcNAc...) asparagine glycans are attached at residues N223, N234, N267, N324, N330, N361, N372, N382, and N445. Residues C244 and C291 are joined by a disulfide bond. C327 and C333 are joined by a disulfide. C379 and C401 are oxidised to a cystine. Residues 464-486 (SLWAGAISFIVLAIVAGLVAILL) form a helical membrane-spanning segment. Residues 487-493 (QCFWKSK) lie on the Cytoplasmic side of the membrane.

This sequence belongs to the GDA1/CD39 NTPase family. Ca(2+) serves as cofactor. Mg(2+) is required as a cofactor. N-glycosylated.

Its subcellular location is the cell membrane. It catalyses the reaction a ribonucleoside 5'-triphosphate + 2 H2O = a ribonucleoside 5'-phosphate + 2 phosphate + 2 H(+). Functionally, canalicular ectonucleoside NTPDase responsible for the main hepatic NTPDase activity. Ectonucleoside ATPases catalyze the hydrolysis of gamma- and beta-phosphate residues of nucleotides, playing a central role in concentration of extracellular nucleotides. The protein is Ectonucleoside triphosphate diphosphohydrolase 8 (ENTPD8) of Gallus gallus (Chicken).